Reading from the N-terminus, the 355-residue chain is C-C chemokine receptor type 3 (355 aa).

Residues 1–34 lie on the Extracellular side of the membrane; it reads MTTSLDTVETFGPTSYDDDMGLLCEKADVGALIA. The chain crosses the membrane as a helical span at residues 35–62; sequence QFVPPLYSLVFMVGLLGNVVVVMILIKY. Residues 63–72 lie on the Cytoplasmic side of the membrane; the sequence is RRLRIMTNIY. Residues 73–93 traverse the membrane as a helical segment; the sequence is LLNLAISDLLFLFTLPFWIHY. At 94-107 the chain is on the extracellular side; that stretch reads VRERNWVFSHGMCK. Residues Cys-106 and Cys-183 are joined by a disulfide bond. The helical transmembrane segment at 108–129 threads the bilayer; that stretch reads VLSGFYHTGLYSEIFFIILLTI. Topologically, residues 130-146 are cytoplasmic; sequence DRYLAIVHAVFALRART. A helical membrane pass occupies residues 147–171; that stretch reads VTFGVVTSIVTWGLAVLAALPEFIF. The Extracellular portion of the chain corresponds to 172–203; that stretch reads YGTEELFPETLCSAIYPQDTVYSWRHFHTLRM. The chain crosses the membrane as a helical span at residues 204–223; sequence TILCLALPLLVMAICYTGII. Residues 224–239 lie on the Cytoplasmic side of the membrane; sequence KTLLRCPSKKKYKAIR. The helical transmembrane segment at 240 to 264 threads the bilayer; it reads LIFVIMAVFFIFWTPYNVAILISTY. The Extracellular segment spans residues 265–281; sequence QSILFGPDCERSKHLDL. Residues 282–305 traverse the membrane as a helical segment; the sequence is FVLVTEVIAYSHCWVNPVIYAFVG. Over 306–355 the chain is Cytoplasmic; the sequence is ERFRKYLRHFFHRHVLMHPGKYIPFLPSEKLERTSSVSPSTAEPELSIVF.

Belongs to the G-protein coupled receptor 1 family.

It is found in the cell membrane. Its function is as follows. Receptor for C-C type chemokine. Binds and responds to a variety of chemokines, including CCL11, CCL26, CCL7, CCL13, RANTES(CCL5) and CCL15. Subsequently transduces a signal by increasing the intracellular calcium ions level. In addition acts as a possible functional receptor for NARS1. The polypeptide is C-C chemokine receptor type 3 (CCR3) (Macaca fascicularis (Crab-eating macaque)).